The sequence spans 354 residues: Probable butyrate kinase (354 aa).

It belongs to the acetokinase family.

It is found in the cytoplasm. It carries out the reaction butanoate + ATP = butanoyl phosphate + ADP. The chain is Probable butyrate kinase from Phocaeicola vulgatus (strain ATCC 8482 / DSM 1447 / JCM 5826 / CCUG 4940 / NBRC 14291 / NCTC 11154) (Bacteroides vulgatus).